The chain runs to 270 residues: MTNHMLDEVRSAAVAAARTARESYRAGKIQPTAGVAPGMTQANMIALPRDWAWDFLLYAQRNPKACPVLDVIEAGAYHTVLAEGADIRTDIPLYRVWRNGRLVEEVADATPLWQEHPDLVTFLIGCSFTFETPLLEAGIEVRHITDGSNVPMYRTNRQCRPAGRLHGELVVSMRPIAASRIADAAMISGRFPSVHGAPVHVGNPEALGIADIHRPDFGDAVRIESGEIPVFWACGVTPQAAVMASGVPFAVTHAPGHMFVTDVPDSTYHV.

Belongs to the D-glutamate cyclase family.

This is Putative hydro-lyase Reut_A2449 from Cupriavidus pinatubonensis (strain JMP 134 / LMG 1197) (Cupriavidus necator (strain JMP 134)).